A 208-amino-acid chain; its full sequence is Inducible T-cell costimulator (208 aa).

Residues 1–19 form the signal peptide; that stretch reads MKSDLWYFLLFCFQVEALT. The Extracellular portion of the chain corresponds to 20-140; it reads GEINDSTKSE…YESQTCCQLK (121 aa). Asn-23 is a glycosylation site (N-linked (GlcNAc...) asparagine). The 103-residue stretch at 30–132 folds into the Ig-like V-type domain; the sequence is MFTFHDGGVQ…ISREYLNVYE (103 aa). 2 cysteine pairs are disulfide-bonded: Cys-42–Cys-108 and Cys-63–Cys-82. The N-linked (GlcNAc...) asparagine glycan is linked to Asn-122. Residues 141-161 form a helical membrane-spanning segment; that stretch reads FWLPIGCAAFVVVYIFGCIFL. Residues 162–208 lie on the Cytoplasmic side of the membrane; sequence CWLTKKKYRSSVHDPNSEYMFMAAVNTAKKPGLTGVTHNLELCGTQA.

As to quaternary structure, homodimer; disulfide-linked. Interacts with ICOSLG. Interacts with PIK3R1. Interacts with TBK1; this interaction is critical for the maturation of T follicular regulatory cells. Post-translationally, N-glycosylated.

It is found in the cell membrane. In terms of biological role, stimulatory receptor expressed in activated or antigen-experienced T-cells that plays an important role in the immune response. Upon binding to its ligand ICOSL expressed on antigen presenting cells (APCs), delivers costimulatory signals that enhances all basic T-cell responses to a foreign antigen, namely proliferation, secretion of lymphokines including IL10, up-regulation of molecules that mediate cell-cell interaction, and effective help for antibody secretion by B-cells. Also acts as a costimulatory receptor critical for the differentiation of T follicular regulatory cells upon immune challenges such as viral infection. Mechanistically, potentiates TCR-induced calcium flux by augmenting PLCG1 activation and actin remodeling. In addition, activates PI3K signaling pathways independently of calcium flux. Essential both for efficient interaction between T and B-cells and for normal antibody responses to T-cell dependent antigens. Prevents the apoptosis of pre-activated T-cells. Plays a critical role in CD40-mediated class switching of immunoglobin isotypes. This Canis lupus familiaris (Dog) protein is Inducible T-cell costimulator (ICOS).